Reading from the N-terminus, the 306-residue chain is Putative type I specificity subunit S.MpnORF285P (306 aa).

The protein belongs to the type-I restriction system S methylase family. As to quaternary structure, the methyltransferase is composed of M and S polypeptides.

Functionally, the specificity (S) subunit of a type I methyltransferase (MTase); this subunit dictates DNA sequence specificity. The single R subunit has multiple frameshifts and is probably not expressed. This is Putative type I specificity subunit S.MpnORF285P from Mycoplasma pneumoniae (strain ATCC 29342 / M129 / Subtype 1) (Mycoplasmoides pneumoniae).